A 225-amino-acid polypeptide reads, in one-letter code: Deoxyribose-phosphate aldolase (225 aa).

The active-site Proton donor/acceptor is the aspartate 96. Residue lysine 157 is the Schiff-base intermediate with acetaldehyde of the active site. Lysine 185 functions as the Proton donor/acceptor in the catalytic mechanism.

This sequence belongs to the DeoC/FbaB aldolase family. DeoC type 1 subfamily.

The protein localises to the cytoplasm. The catalysed reaction is 2-deoxy-D-ribose 5-phosphate = D-glyceraldehyde 3-phosphate + acetaldehyde. The protein operates within carbohydrate degradation; 2-deoxy-D-ribose 1-phosphate degradation; D-glyceraldehyde 3-phosphate and acetaldehyde from 2-deoxy-alpha-D-ribose 1-phosphate: step 2/2. In terms of biological role, catalyzes a reversible aldol reaction between acetaldehyde and D-glyceraldehyde 3-phosphate to generate 2-deoxy-D-ribose 5-phosphate. The protein is Deoxyribose-phosphate aldolase of Microcystis aeruginosa (strain NIES-843 / IAM M-2473).